Consider the following 667-residue polypeptide: DNA ligase (667 aa).

Residues 34-38 (DAEYD), 83-84 (SL), and Glu-113 each bind NAD(+). The active-site N6-AMP-lysine intermediate is Lys-115. Residues Arg-136, Glu-170, Lys-286, and Lys-310 each contribute to the NAD(+) site. Zn(2+) is bound by residues Cys-404, Cys-407, Cys-422, and Cys-427. The region spanning 589-667 (ATDSVLSGKT…EQQLEDVVGK (79 aa)) is the BRCT domain.

Belongs to the NAD-dependent DNA ligase family. LigA subfamily. The cofactor is Mg(2+). Requires Mn(2+) as cofactor.

The enzyme catalyses NAD(+) + (deoxyribonucleotide)n-3'-hydroxyl + 5'-phospho-(deoxyribonucleotide)m = (deoxyribonucleotide)n+m + AMP + beta-nicotinamide D-nucleotide.. Functionally, DNA ligase that catalyzes the formation of phosphodiester linkages between 5'-phosphoryl and 3'-hydroxyl groups in double-stranded DNA using NAD as a coenzyme and as the energy source for the reaction. It is essential for DNA replication and repair of damaged DNA. The polypeptide is DNA ligase (Oceanobacillus iheyensis (strain DSM 14371 / CIP 107618 / JCM 11309 / KCTC 3954 / HTE831)).